The chain runs to 1194 residues: ATP-dependent RNA helicase DHX30 (1194 aa).

The segment covering 1-10 (MFTLDSFRKD) has biased composition (basic and acidic residues). Positions 1-27 (MFTLDSFRKDRTQHRQRQCKLPPPRLP) are disordered. A Phosphoserine modification is found at Ser6. One can recognise a DRBM domain in the interval 53-121 (PKNLLNSVIG…QAAAAACQLF (69 aa)). A disordered region spans residues 153-200 (WWRPEPTMPPTSWRQLNPENIRPAGTGGLSRSLGREEEEDEEEELEEG). Positions 188-200 (EEEEDEEEELEEG) are enriched in acidic residues. A phosphoserine mark is found at Ser226 and Ser380. The Helicase ATP-binding domain occupies 444-612 (LSAIEQHPVV…FGGCPVIKVP (169 aa)). 457-464 (GDTGCGKT) contributes to the ATP binding site. A DEAH box motif is present at residues 559–562 (DEVH). Residues 654–827 (LVTDLVLHID…NLVLQAKIHM (174 aa)) enclose the Helicase C-terminal domain.

This sequence belongs to the DEAD box helicase family. DEAH subfamily. As to quaternary structure, identified in a complex with TFAM and SSBP1. Interacts (via N-terminus) with ZC3HAV1 (via N-terminal domain) in an RNA-independent manner. Found in a complex with GRSF1, DDX28, FASTKD2 and FASTKD5.

It is found in the cytoplasm. Its subcellular location is the mitochondrion. The protein localises to the mitochondrion matrix. The protein resides in the mitochondrion nucleoid. It catalyses the reaction ATP + H2O = ADP + phosphate + H(+). In terms of biological role, RNA-dependent helicase. Plays an important role in the assembly of the mitochondrial large ribosomal subunit. Associates with mitochondrial DNA. Required for optimal function of the zinc-finger antiviral protein ZC3HAV1. Involved in nervous system development and differentiation through its involvement in the up-regulation of a number of genes which are required for neurogenesis, including GSC, NCAM1, neurogenin, and NEUROD. In Rattus norvegicus (Rat), this protein is ATP-dependent RNA helicase DHX30 (Dhx30).